The sequence spans 322 residues: Coelomocyte uptake defective protein 15 (322 aa).

Residues 1–20 form the signal peptide; the sequence is MVNSLSRILFCSLLIFSVIS. N-linked (GlcNAc...) asparagine glycans are attached at residues N62, N98, N144, N170, N180, N183, and N222. A helical membrane pass occupies residues 244–264; sequence LFGIMITFGTLLLLTALFYAA.

Belongs to the OSTM1 family.

It localises to the membrane. Functionally, modulates the transport of substances from the endosomal to lysosomal compartments. Plays a role in lysosome formation and function in coelomocytes. The chain is Coelomocyte uptake defective protein 15 from Caenorhabditis elegans.